A 364-amino-acid chain; its full sequence is Fructose-bisphosphate aldolase A (364 aa).

Y5 carries the phosphotyrosine modification. T9 is modified (phosphothreonine). Phosphoserine occurs at positions 36 and 39. The residue at position 42 (K42) is an N6-acetyllysine; alternate. A Glycyl lysine isopeptide (Lys-Gly) (interchain with G-Cter in SUMO1); alternate cross-link involves residue K42. Residue K42 forms a Glycyl lysine isopeptide (Lys-Gly) (interchain with G-Cter in SUMO2); alternate linkage. R43 lines the beta-D-fructose 1,6-bisphosphate pocket. S46 is modified (phosphoserine). An N6-(2-hydroxyisobutyryl)lysine modification is found at K99. At K108 the chain carries N6-acetyllysine. K111 bears the N6-acetyllysine; alternate mark. K111 is modified (N6-malonyllysine; alternate). S132 is modified (phosphoserine). K147 carries the post-translational modification N6-(2-hydroxyisobutyryl)lysine. Residue E188 is the Proton acceptor of the active site. K230 serves as the catalytic Schiff-base intermediate with dihydroxyacetone-P. S272 bears the Phosphoserine mark. Residues 272-274 (SGG), S301, and R304 contribute to the beta-D-fructose 1,6-bisphosphate site. The residue at position 312 (K312) is an N6-malonyllysine. K330 carries the N6-acetyllysine modification.

Belongs to the class I fructose-bisphosphate aldolase family. As to quaternary structure, homotetramer. Interacts with SNX9 and WAS. Interacts with FBP2; the interaction blocks FBP2 inhibition by physiological concentrations of AMP and reduces inhibition by Ca(2+). In terms of tissue distribution, expressed in muscle, brain and hepatoma cells.

Its subcellular location is the cytoplasm. It is found in the myofibril. The protein resides in the sarcomere. The protein localises to the i band. It localises to the m line. The enzyme catalyses beta-D-fructose 1,6-bisphosphate = D-glyceraldehyde 3-phosphate + dihydroxyacetone phosphate. It participates in carbohydrate degradation; glycolysis; D-glyceraldehyde 3-phosphate and glycerone phosphate from D-glucose: step 4/4. Its function is as follows. Catalyzes the reversible conversion of beta-D-fructose 1,6-bisphosphate (FBP) into two triose phosphate and plays a key role in glycolysis and gluconeogenesis. In addition, may also function as scaffolding protein. The sequence is that of Fructose-bisphosphate aldolase A (Aldoa) from Rattus norvegicus (Rat).